We begin with the raw amino-acid sequence, 230 residues long: Large ribosomal subunit protein uL1 (230 aa).

The protein belongs to the universal ribosomal protein uL1 family. Part of the 50S ribosomal subunit.

Functionally, binds directly to 23S rRNA. The L1 stalk is quite mobile in the ribosome, and is involved in E site tRNA release. Protein L1 is also a translational repressor protein, it controls the translation of the L11 operon by binding to its mRNA. In Acholeplasma laidlawii (strain PG-8A), this protein is Large ribosomal subunit protein uL1.